The sequence spans 172 residues: Shikimate kinase (172 aa).

Position 14-19 (Gly-14–Thr-19) interacts with ATP. Residue Ser-18 participates in Mg(2+) binding. Residues Asp-36, Arg-60, and Gly-82 each coordinate substrate. Position 120 (Arg-120) interacts with ATP. Arg-139 contributes to the substrate binding site. Residue Gln-156 participates in ATP binding.

Belongs to the shikimate kinase family. Monomer. It depends on Mg(2+) as a cofactor.

It is found in the cytoplasm. It carries out the reaction shikimate + ATP = 3-phosphoshikimate + ADP + H(+). The protein operates within metabolic intermediate biosynthesis; chorismate biosynthesis; chorismate from D-erythrose 4-phosphate and phosphoenolpyruvate: step 5/7. Its function is as follows. Catalyzes the specific phosphorylation of the 3-hydroxyl group of shikimic acid using ATP as a cosubstrate. This Aliivibrio fischeri (strain ATCC 700601 / ES114) (Vibrio fischeri) protein is Shikimate kinase.